Here is a 707-residue protein sequence, read N- to C-terminus: Polyribonucleotide nucleotidyltransferase (707 aa).

Aspartate 487 and aspartate 493 together coordinate Mg(2+). The 60-residue stretch at 554 to 613 folds into the KH domain; it reads PKILTMNINPDKIRDVIGPSGKQINKIIEDTGVKIDIEQDGTIFISSTDESSNQKAKKII. Residues 623–691 enclose the S1 motif domain; sequence GQLYLGKVKR…KQGRVNLSRK (69 aa).

Belongs to the polyribonucleotide nucleotidyltransferase family. Requires Mg(2+) as cofactor.

It is found in the cytoplasm. The catalysed reaction is RNA(n+1) + phosphate = RNA(n) + a ribonucleoside 5'-diphosphate. Involved in mRNA degradation. Catalyzes the phosphorolysis of single-stranded polyribonucleotides processively in the 3'- to 5'-direction. In Bacillus velezensis (strain DSM 23117 / BGSC 10A6 / LMG 26770 / FZB42) (Bacillus amyloliquefaciens subsp. plantarum), this protein is Polyribonucleotide nucleotidyltransferase.